The sequence spans 280 residues: Dual adapter for phosphotyrosine and 3-phosphotyrosine and 3-phosphoinositide (280 aa).

The interval 1–20 (MGRAELLEGKMSTQDPSDLW) is disordered. Positions 35-129 (WYHGNLTRHA…GTLMVLKHPY (95 aa)) constitute an SH2 domain. Phosphotyrosine is present on Tyr139. Ser141 bears the Phosphoserine mark. The 96-residue stretch at 164-259 (LGTKEGYLTK…WIKILRWKLS (96 aa)) folds into the PH domain.

Interacts with PtdIns(3,4,5)P3 and PLCG2. In vitro, interacts with PtdIns(3,4)P2. Phosphorylated on tyrosine residues. In terms of tissue distribution, highly expressed in placenta and lung, followed by brain, heart, kidney, liver, pancreas and skeletal muscle. Expressed by B-lymphocytes, but not T-lymphocytes or nonhematopoietic cells.

The protein localises to the cytoplasm. Its subcellular location is the membrane. Functionally, may act as a B-cell-associated adapter that regulates B-cell antigen receptor (BCR)-signaling downstream of PI3K. In Homo sapiens (Human), this protein is Dual adapter for phosphotyrosine and 3-phosphotyrosine and 3-phosphoinositide (DAPP1).